The chain runs to 205 residues: tRNA (guanine-N(7)-)-methyltransferase (205 aa).

S-adenosyl-L-methionine-binding residues include glutamate 36, glutamate 61, aspartate 88, and aspartate 109. The active site involves aspartate 109. Substrate is bound at residue lysine 113. Positions 115-120 are interaction with RNA; the sequence is RHEKRR. Residues aspartate 145 and 183–186 each bind substrate; that span reads TGYE.

The protein belongs to the class I-like SAM-binding methyltransferase superfamily. TrmB family.

It catalyses the reaction guanosine(46) in tRNA + S-adenosyl-L-methionine = N(7)-methylguanosine(46) in tRNA + S-adenosyl-L-homocysteine. The protein operates within tRNA modification; N(7)-methylguanine-tRNA biosynthesis. Functionally, catalyzes the formation of N(7)-methylguanine at position 46 (m7G46) in tRNA. The sequence is that of tRNA (guanine-N(7)-)-methyltransferase from Mycoplasmopsis agalactiae (strain NCTC 10123 / CIP 59.7 / PG2) (Mycoplasma agalactiae).